The primary structure comprises 321 residues: Electron transfer flavoprotein subunit alpha (321 aa).

Residues arginine 211, serine 236, arginine 237, glutamine 250, valine 251, serine 254, glycine 255, serine 270, serine 272, glutamine 274, histidine 275, asparagine 289, aspartate 307, and isoleucine 308 each contribute to the FAD site.

As to quaternary structure, heterodimer of an alpha and a beta subunit. Forms a ternary complex with trimethylamine dehydrogenase. The cofactor is FAD.

Its function is as follows. Heterodimeric electron transfer flavoprotein that accepts electrons from trimethylamine dehydrogenase. It transfers the electrons to the main respiratory chain via ETF-ubiquinone oxidoreductase (ETF dehydrogenase). The polypeptide is Electron transfer flavoprotein subunit alpha (etfA) (Methylophilus methylotrophus (Bacterium W3A1)).